The primary structure comprises 176 residues: Adipose-secreted signaling protein (176 aa).

Residues 1–30 are disordered; that stretch reads MATAGKGSKGKGTGVRFTPEGTQGHPQEGT. Residues 20-30 are compositionally biased toward polar residues; the sequence is EGTQGHPQEGT.

It belongs to the ADISSP family.

Its function is as follows. May be involved in thermogenesis and glucose homeostasis. The chain is Adipose-secreted signaling protein from Taeniopygia guttata (Zebra finch).